We begin with the raw amino-acid sequence, 465 residues long: 2-methylcitrate synthase, mitochondrial (465 aa).

A mitochondrion-targeting transit peptide spans 1-29; the sequence is MAMTMRSTRHASKLAQTARLALTNSRRYS. Residues R74 and K192 each contribute to the CoA site. H269 serves as a coordination point for oxaloacetate. Position 304 (L304) interacts with CoA. H305 is an active-site residue. CoA is bound by residues V346, G348, and Y349. Residues H351 and R360 each contribute to the oxaloacetate site. Residue H351 is part of the active site. CoA is bound by residues T400, K401, and N406. The active site involves D408. Positions 434 and 454 each coordinate oxaloacetate.

Belongs to the citrate synthase family. As to quaternary structure, homodimer.

It is found in the mitochondrion matrix. The enzyme catalyses propanoyl-CoA + oxaloacetate + H2O = (2S,3S)-2-methylcitrate + CoA + H(+). The catalysed reaction is oxaloacetate + acetyl-CoA + H2O = citrate + CoA + H(+). It participates in organic acid metabolism; propanoate degradation. Functionally, component of the methylcitrate cycle that catalyzes the synthesis of (2S,3S)-2-methylcitrate from propionyl-CoA and oxaloacetate. Plays an important role in detoxification of propionyl-CoA, an inhibitor of both primary and secondary metabolism. Also has citrate synthase activity using as substrates acetyl-CoA and oxaloacetate. Plays a key role in the estabishment of invasive pulmonary aspergillosis. The polypeptide is 2-methylcitrate synthase, mitochondrial (Aspergillus fumigatus (strain CBS 144.89 / FGSC A1163 / CEA10) (Neosartorya fumigata)).